The primary structure comprises 372 residues: DNA replication and repair protein RecF (372 aa).

30–37 is a binding site for ATP; sequence GANGQGKT.

Belongs to the RecF family.

The protein localises to the cytoplasm. The RecF protein is involved in DNA metabolism; it is required for DNA replication and normal SOS inducibility. RecF binds preferentially to single-stranded, linear DNA. It also seems to bind ATP. In Heliobacterium modesticaldum (strain ATCC 51547 / Ice1), this protein is DNA replication and repair protein RecF.